A 413-amino-acid chain; its full sequence is Serine hydroxymethyltransferase (413 aa).

Residues Leu-117 and 121-123 (GHL) contribute to the (6S)-5,6,7,8-tetrahydrofolate site. Lys-226 bears the N6-(pyridoxal phosphate)lysine mark. (6S)-5,6,7,8-tetrahydrofolate is bound by residues Glu-239 and 349-351 (SPF).

Belongs to the SHMT family. Homodimer. Requires pyridoxal 5'-phosphate as cofactor.

The protein resides in the cytoplasm. It carries out the reaction (6R)-5,10-methylene-5,6,7,8-tetrahydrofolate + glycine + H2O = (6S)-5,6,7,8-tetrahydrofolate + L-serine. The protein operates within one-carbon metabolism; tetrahydrofolate interconversion. It functions in the pathway amino-acid biosynthesis; glycine biosynthesis; glycine from L-serine: step 1/1. Catalyzes the reversible interconversion of serine and glycine with tetrahydrofolate (THF) serving as the one-carbon carrier. This reaction serves as the major source of one-carbon groups required for the biosynthesis of purines, thymidylate, methionine, and other important biomolecules. Also exhibits THF-independent aldolase activity toward beta-hydroxyamino acids, producing glycine and aldehydes, via a retro-aldol mechanism. The sequence is that of Serine hydroxymethyltransferase from Bacillus cereus (strain G9842).